The chain runs to 236 residues: Leucyl/phenylalanyl-tRNA--protein transferase (236 aa).

This sequence belongs to the L/F-transferase family.

The protein resides in the cytoplasm. It carries out the reaction N-terminal L-lysyl-[protein] + L-leucyl-tRNA(Leu) = N-terminal L-leucyl-L-lysyl-[protein] + tRNA(Leu) + H(+). The catalysed reaction is N-terminal L-arginyl-[protein] + L-leucyl-tRNA(Leu) = N-terminal L-leucyl-L-arginyl-[protein] + tRNA(Leu) + H(+). The enzyme catalyses L-phenylalanyl-tRNA(Phe) + an N-terminal L-alpha-aminoacyl-[protein] = an N-terminal L-phenylalanyl-L-alpha-aminoacyl-[protein] + tRNA(Phe). Functionally, functions in the N-end rule pathway of protein degradation where it conjugates Leu, Phe and, less efficiently, Met from aminoacyl-tRNAs to the N-termini of proteins containing an N-terminal arginine or lysine. The chain is Leucyl/phenylalanyl-tRNA--protein transferase from Vibrio campbellii (strain ATCC BAA-1116).